Consider the following 118-residue polypeptide: Ribonuclease P protein component (118 aa).

This sequence belongs to the RnpA family. As to quaternary structure, consists of a catalytic RNA component (M1 or rnpB) and a protein subunit.

It catalyses the reaction Endonucleolytic cleavage of RNA, removing 5'-extranucleotides from tRNA precursor.. Its function is as follows. RNaseP catalyzes the removal of the 5'-leader sequence from pre-tRNA to produce the mature 5'-terminus. It can also cleave other RNA substrates such as 4.5S RNA. The protein component plays an auxiliary but essential role in vivo by binding to the 5'-leader sequence and broadening the substrate specificity of the ribozyme. This Rickettsia conorii (strain ATCC VR-613 / Malish 7) protein is Ribonuclease P protein component.